Consider the following 320-residue polypeptide: MVTVVDRVTSRRLRHPEKMHRPDTSIQKKPDWIRVKAPTSKIYKETYDIVRAHKLVTVCEEAGCPNVGECWSQRHASFMILGEICTRACAFCNVATGIPLAVDDNEPERVADAVAQMELKHVVITSVDRDDLADGGAQHFAKVIYAIRRKAPKTTIEVLTPDFRHKDGALEIVVAAKPDVFNHNLETVPSKYLKVRPGARYFHSIRLLQRVKELDPTIFTKSGIMVGLGEERNEILQLMDDLRSADVDFMTIGQYLQPTRKHHPVIRFFPPEEFESFAKIGKVKGFLHMASNPLTRSSHHAGDDFAILQKARDEKFALQR.

The tract at residues 1 to 26 (MVTVVDRVTSRRLRHPEKMHRPDTSI) is disordered. Residues cysteine 59, cysteine 64, cysteine 70, cysteine 85, cysteine 89, cysteine 92, and serine 298 each contribute to the [4Fe-4S] cluster site. In terms of domain architecture, Radical SAM core spans 71–287 (WSQRHASFMI…AKIGKVKGFL (217 aa)).

The protein belongs to the radical SAM superfamily. Lipoyl synthase family. The cofactor is [4Fe-4S] cluster.

Its subcellular location is the cytoplasm. It carries out the reaction [[Fe-S] cluster scaffold protein carrying a second [4Fe-4S](2+) cluster] + N(6)-octanoyl-L-lysyl-[protein] + 2 oxidized [2Fe-2S]-[ferredoxin] + 2 S-adenosyl-L-methionine + 4 H(+) = [[Fe-S] cluster scaffold protein] + N(6)-[(R)-dihydrolipoyl]-L-lysyl-[protein] + 4 Fe(3+) + 2 hydrogen sulfide + 2 5'-deoxyadenosine + 2 L-methionine + 2 reduced [2Fe-2S]-[ferredoxin]. Its pathway is protein modification; protein lipoylation via endogenous pathway; protein N(6)-(lipoyl)lysine from octanoyl-[acyl-carrier-protein]: step 2/2. In terms of biological role, catalyzes the radical-mediated insertion of two sulfur atoms into the C-6 and C-8 positions of the octanoyl moiety bound to the lipoyl domains of lipoate-dependent enzymes, thereby converting the octanoylated domains into lipoylated derivatives. This chain is Lipoyl synthase, found in Bartonella quintana (strain Toulouse) (Rochalimaea quintana).